Consider the following 882-residue polypeptide: Probable LRR receptor-like serine/threonine-protein kinase At1g12460 (882 aa).

An N-terminal signal peptide occupies residues M1–S21. Residues D22 to S515 lie on the Extracellular side of the membrane. An N-linked (GlcNAc...) asparagine glycan is attached at N76. LRR repeat units lie at residues F92–K113, T116–L138, S140–F162, K165–C187, N189–D210, V213–C235, R237–T258, N261–S283, S285–K308, S309–M331, S333–L355, F357–C379, V381–T404, N405–L427, K429–L451, and T453–Q475. N-linked (GlcNAc...) asparagine glycosylation occurs at N121. N-linked (GlcNAc...) asparagine glycans are attached at residues N261 and N266. 2 N-linked (GlcNAc...) asparagine glycosylation sites follow: N321 and N341. N-linked (GlcNAc...) asparagine glycans are attached at residues N402, N417, and N426. N-linked (GlcNAc...) asparagine glycosylation is found at N458 and N463. Residues V516–L536 traverse the membrane as a helical segment. The Cytoplasmic portion of the chain corresponds to N537–S882. The residue at position 589 (T589) is a Phosphothreonine. Residues L593 to I876 form the Protein kinase domain. ATP contacts are provided by residues I599–V607 and K621. Position 770 is a phosphotyrosine (Y770).

Belongs to the protein kinase superfamily. Ser/Thr protein kinase family.

The protein localises to the cell membrane. The catalysed reaction is L-seryl-[protein] + ATP = O-phospho-L-seryl-[protein] + ADP + H(+). The enzyme catalyses L-threonyl-[protein] + ATP = O-phospho-L-threonyl-[protein] + ADP + H(+). The sequence is that of Probable LRR receptor-like serine/threonine-protein kinase At1g12460 from Arabidopsis thaliana (Mouse-ear cress).